A 137-amino-acid polypeptide reads, in one-letter code: NADH-quinone oxidoreductase subunit A 1 (137 aa).

Helical transmembrane passes span 14–34 (FAAF…VSAL), 66–86 (FYLV…LFAW), and 95–115 (WAGL…LVYL).

The protein belongs to the complex I subunit 3 family. In terms of assembly, NDH-1 is composed of 13 different subunits. Subunits NuoA, H, J, K, L, M, N constitute the membrane sector of the complex.

It localises to the cell inner membrane. The enzyme catalyses a quinone + NADH + 5 H(+)(in) = a quinol + NAD(+) + 4 H(+)(out). NDH-1 shuttles electrons from NADH, via FMN and iron-sulfur (Fe-S) centers, to quinones in the respiratory chain. The immediate electron acceptor for the enzyme in this species is believed to be ubiquinone. Couples the redox reaction to proton translocation (for every two electrons transferred, four hydrogen ions are translocated across the cytoplasmic membrane), and thus conserves the redox energy in a proton gradient. This is NADH-quinone oxidoreductase subunit A 1 from Pseudomonas paraeruginosa (strain DSM 24068 / PA7) (Pseudomonas aeruginosa (strain PA7)).